The chain runs to 72 residues: MSAIFNFQSLLTVILLLICTCAYIRSLAPSLLDRNKTGLLGIFWKCARIGERKSPYVAVCCIVMAFSILFIQ.

The first 26 residues, 1 to 26 (MSAIFNFQSLLTVILLLICTCAYIRS), serve as a signal peptide directing secretion. Residues 27-53 (LAPSLLDRNKTGLLGIFWKCARIGERK) lie on the Extracellular side of the membrane. The N-linked (GlcNAc...) asparagine glycan is linked to asparagine 35. A helical transmembrane segment spans residues 54–71 (SPYVAVCCIVMAFSILFI). Position 72 (glutamine 72) is a topological domain, cytoplasmic.

The protein belongs to the KISH family.

It localises to the golgi apparatus membrane. Involved in the early part of the secretory pathway. The chain is Protein kish-A (TMEM167A) from Bos taurus (Bovine).